The chain runs to 364 residues: tRNA/tmRNA (uracil-C(5))-methyltransferase (364 aa).

Residues Gln-189, Tyr-216, Asn-221, Glu-237, and Asp-297 each contribute to the S-adenosyl-L-methionine site. The Nucleophile role is filled by Cys-322. The Proton acceptor role is filled by Glu-356.

This sequence belongs to the class I-like SAM-binding methyltransferase superfamily. RNA M5U methyltransferase family. TrmA subfamily.

The enzyme catalyses uridine(54) in tRNA + S-adenosyl-L-methionine = 5-methyluridine(54) in tRNA + S-adenosyl-L-homocysteine + H(+). The catalysed reaction is uridine(341) in tmRNA + S-adenosyl-L-methionine = 5-methyluridine(341) in tmRNA + S-adenosyl-L-homocysteine + H(+). In terms of biological role, dual-specificity methyltransferase that catalyzes the formation of 5-methyluridine at position 54 (m5U54) in all tRNAs, and that of position 341 (m5U341) in tmRNA (transfer-mRNA). The polypeptide is tRNA/tmRNA (uracil-C(5))-methyltransferase (Campylobacter curvus (strain 525.92)).